Here is a 433-residue protein sequence, read N- to C-terminus: Glutamate-1-semialdehyde 2,1-aminomutase (433 aa).

Lys-272 is subject to N6-(pyridoxal phosphate)lysine.

It belongs to the class-III pyridoxal-phosphate-dependent aminotransferase family. HemL subfamily. Homodimer. Pyridoxal 5'-phosphate serves as cofactor.

It localises to the cytoplasm. It catalyses the reaction (S)-4-amino-5-oxopentanoate = 5-aminolevulinate. Its pathway is porphyrin-containing compound metabolism; protoporphyrin-IX biosynthesis; 5-aminolevulinate from L-glutamyl-tRNA(Glu): step 2/2. The chain is Glutamate-1-semialdehyde 2,1-aminomutase from Magnetococcus marinus (strain ATCC BAA-1437 / JCM 17883 / MC-1).